We begin with the raw amino-acid sequence, 321 residues long: Peroxidase 5 (321 aa).

Residues 1 to 24 (MERFSLRFVLMMVSIILTSSICQA) form the signal peptide. At glutamine 25 the chain carries Pyrrolidone carboxylic acid. 4 disulfides stabilise this stretch: cysteine 35-cysteine 115, cysteine 68-cysteine 73, cysteine 121-cysteine 317, and cysteine 201-cysteine 227. Histidine 66 (proton acceptor) is an active-site residue. Ca(2+) contacts are provided by aspartate 67, valine 70, glycine 72, aspartate 74, and serine 76. Proline 164 is a substrate binding site. A heme b-binding site is contributed by histidine 194. Threonine 195 contacts Ca(2+). The N-linked (GlcNAc...) asparagine glycan is linked to asparagine 211. Residues aspartate 240, threonine 243, and aspartate 248 each contribute to the Ca(2+) site. N-linked (GlcNAc...) asparagine glycosylation occurs at asparagine 285.

The protein belongs to the peroxidase family. Classical plant (class III) peroxidase subfamily. It depends on heme b as a cofactor. Ca(2+) serves as cofactor.

Its subcellular location is the secreted. The catalysed reaction is 2 a phenolic donor + H2O2 = 2 a phenolic radical donor + 2 H2O. Functionally, removal of H(2)O(2), oxidation of toxic reductants, biosynthesis and degradation of lignin, suberization, auxin catabolism, response to environmental stresses such as wounding, pathogen attack and oxidative stress. These functions might be dependent on each isozyme/isoform in each plant tissue. The chain is Peroxidase 5 (PER5) from Arabidopsis thaliana (Mouse-ear cress).